We begin with the raw amino-acid sequence, 126 residues long: Histone H2B type 1-N (126 aa).

Positions 1–12 are enriched in low complexity; that stretch reads MPEPSKSAPAPK. The interval 1–36 is disordered; sequence MPEPSKSAPAPKKGSKKAVTKAQKKDGKKRKRSRKE. Proline 2 bears the N-acetylproline mark. Glutamate 3 bears the ADP-ribosyl glutamic acid mark. Residue lysine 6 is modified to N6-(2-hydroxyisobutyryl)lysine; alternate. Lysine 6 carries the post-translational modification N6-(beta-hydroxybutyryl)lysine; alternate. Position 6 is an N6-acetyllysine; alternate (lysine 6). Lysine 6 is subject to N6-butyryllysine; alternate. Residue lysine 6 is modified to N6-crotonyllysine; alternate. Lysine 6 is modified (N6-lactoyllysine; alternate). Lysine 6 is covalently cross-linked (Glycyl lysine isopeptide (Lys-Gly) (interchain with G-Cter in SUMO2); alternate). Position 7 is an ADP-ribosylserine (serine 7). Position 12 is an N6-(beta-hydroxybutyryl)lysine; alternate (lysine 12). 2 positions are modified to N6-acetyllysine; alternate: lysine 12 and lysine 13. Lysine 12 and lysine 13 each carry N6-crotonyllysine; alternate. Lysine 12 carries the N6-lactoyllysine; alternate modification. N6-(2-hydroxyisobutyryl)lysine; alternate is present on lysine 13. Phosphoserine; by STK4/MST1 is present on serine 15. Lysine 16, lysine 17, lysine 21, and lysine 24 each carry N6-acetyllysine; alternate. Lysine 16, lysine 17, lysine 21, and lysine 24 each carry N6-crotonyllysine; alternate. N6-lactoyllysine; alternate is present on residues lysine 16, lysine 17, lysine 21, and lysine 24. Residue lysine 17 is modified to N6-glutaryllysine; alternate. N6-(2-hydroxyisobutyryl)lysine; alternate is present on residues lysine 21 and lysine 24. Lysine 21 is modified (N6-(beta-hydroxybutyryl)lysine; alternate). Lysine 21 is modified (N6-butyryllysine; alternate). A Glycyl lysine isopeptide (Lys-Gly) (interchain with G-Cter in SUMO2); alternate cross-link involves residue lysine 21. Lysine 25 is subject to N6-(2-hydroxyisobutyryl)lysine. At lysine 35 the chain carries N6-(2-hydroxyisobutyryl)lysine; alternate. The residue at position 35 (lysine 35) is an N6-(beta-hydroxybutyryl)lysine; alternate. At lysine 35 the chain carries N6-crotonyllysine; alternate. Lysine 35 bears the N6-glutaryllysine; alternate mark. Lysine 35 bears the N6-succinyllysine; alternate mark. Residue lysine 35 forms a Glycyl lysine isopeptide (Lys-Gly) (interchain with G-Cter in ubiquitin); alternate linkage. The residue at position 36 (glutamate 36) is a PolyADP-ribosyl glutamic acid. Serine 37 carries the phosphoserine; by AMPK modification. Lysine 44, lysine 47, and lysine 58 each carry N6-(2-hydroxyisobutyryl)lysine; alternate. Position 44 is an N6-lactoyllysine; alternate (lysine 44). Lysine 44 and lysine 47 each carry N6-glutaryllysine; alternate. Lysine 47 carries the N6-methyllysine; alternate modification. The residue at position 58 (lysine 58) is an N6,N6-dimethyllysine; alternate. Arginine 80 is modified (dimethylated arginine). Position 86 is an N6-(2-hydroxyisobutyryl)lysine; alternate (lysine 86). Lysine 86 is subject to N6-acetyllysine; alternate. An N6-lactoyllysine; alternate modification is found at lysine 86. Lysine 86 bears the N6,N6,N6-trimethyllysine; alternate mark. Arginine 87 and arginine 93 each carry omega-N-methylarginine. Residue lysine 109 is modified to N6-(2-hydroxyisobutyryl)lysine; alternate. Lysine 109 is modified (N6-lactoyllysine; alternate). The residue at position 109 (lysine 109) is an N6-glutaryllysine; alternate. Residue lysine 109 is modified to N6-methyllysine; alternate. Serine 113 carries an O-linked (GlcNAc) serine glycan. Threonine 116 is modified (phosphothreonine). N6-(2-hydroxyisobutyryl)lysine; alternate occurs at positions 117 and 121. An N6-(beta-hydroxybutyryl)lysine; alternate modification is found at lysine 117. N6-lactoyllysine; alternate is present on residues lysine 117 and lysine 121. 2 positions are modified to N6-glutaryllysine; alternate: lysine 117 and lysine 121. Lysine 117 and lysine 121 each carry N6-succinyllysine; alternate. An N6-methylated lysine; alternate modification is found at lysine 117. Lysine 121 participates in a covalent cross-link: Glycyl lysine isopeptide (Lys-Gly) (interchain with G-Cter in ubiquitin); alternate.

It belongs to the histone H2B family. In terms of assembly, the nucleosome is a histone octamer containing two molecules each of H2A, H2B, H3 and H4 assembled in one H3-H4 heterotetramer and two H2A-H2B heterodimers. The octamer wraps approximately 147 bp of DNA. Monoubiquitination at Lys-35 (H2BK34Ub) by the MSL1/MSL2 dimer is required for histone H3 'Lys-4' (H3K4me) and 'Lys-79' (H3K79me) methylation and transcription activation at specific gene loci, such as HOXA9 and MEIS1 loci. Similarly, monoubiquitination at Lys-121 (H2BK120Ub) by the RNF20/40 complex gives a specific tag for epigenetic transcriptional activation and is also prerequisite for histone H3 'Lys-4' and 'Lys-79' methylation. It also functions cooperatively with the FACT dimer to stimulate elongation by RNA polymerase II. H2BK120Ub also acts as a regulator of mRNA splicing: deubiquitination by USP49 is required for efficient cotranscriptional splicing of a large set of exons. Post-translationally, phosphorylated on Ser-15 (H2BS14ph) by STK4/MST1 during apoptosis; which facilitates apoptotic chromatin condensation. Also phosphorylated on Ser-15 in response to DNA double strand breaks (DSBs), and in correlation with somatic hypermutation and immunoglobulin class-switch recombination. Phosphorylation at Ser-37 (H2BS36ph) by AMPK in response to stress promotes transcription. In terms of processing, glcNAcylation at Ser-113 promotes monoubiquitination of Lys-121. It fluctuates in response to extracellular glucose, and associates with transcribed genes. ADP-ribosylated by PARP1 or PARP2 on Ser-7 (H2BS6ADPr) in response to DNA damage. H2BS6ADPr promotes recruitment of CHD1L. Mono-ADP-ribosylated on Glu-3 (H2BE2ADPr) by PARP3 in response to single-strand breaks. Poly ADP-ribosylation on Glu-36 (H2BE35ADPr) by PARP1 regulates adipogenesis: it inhibits phosphorylation at Ser-37 (H2BS36ph), thereby blocking expression of pro-adipogenetic genes. Post-translationally, crotonylation (Kcr) is specifically present in male germ cells and marks testis-specific genes in post-meiotic cells, including X-linked genes that escape sex chromosome inactivation in haploid cells. Crotonylation marks active promoters and enhancers and confers resistance to transcriptional repressors. It is also associated with post-meiotically activated genes on autosomes. In terms of processing, lactylated in macrophages by EP300/P300 by using lactoyl-CoA directly derived from endogenous or exogenous lactate, leading to stimulates gene transcription.

It localises to the nucleus. The protein resides in the chromosome. Its function is as follows. Core component of nucleosome. Nucleosomes wrap and compact DNA into chromatin, limiting DNA accessibility to the cellular machineries which require DNA as a template. Histones thereby play a central role in transcription regulation, DNA repair, DNA replication and chromosomal stability. DNA accessibility is regulated via a complex set of post-translational modifications of histones, also called histone code, and nucleosome remodeling. This Bos taurus (Bovine) protein is Histone H2B type 1-N (H2BC15).